A 237-amino-acid polypeptide reads, in one-letter code: Alpha-S1-casein (237 aa).

The first 15 residues, 1-15 (MKLLIFSCLVTLALA), serve as a signal peptide directing secretion. Residues 39 to 60 (EDPIPVSEASSSEESVHQLNRD) are disordered. Residues S79, S80, and S81 each carry the phosphoserine modification.

The protein belongs to the alpha-casein family. Mammary gland specific. Secreted in milk.

It localises to the secreted. In terms of biological role, important role in the capacity of milk to transport calcium phosphate. This is Alpha-S1-casein (CSN1S1) from Notamacropus eugenii (Tammar wallaby).